The primary structure comprises 572 residues: Mitochondrial distribution and morphology protein 34 (572 aa).

Residues 1–195 (MAFNFNWSPL…LPAIIHRLSL (195 aa)) enclose the SMP-LTD domain. 4 disordered regions span residues 212-236 (TASA…VDAL), 355-426 (GAGR…PDND), 487-507 (HGAS…GSSR), and 552-572 (ACGP…AYGH). Positions 358-370 (RHSKAHARKRKKR) are enriched in basic residues. Positions 371–381 (VVDLRRPKTTD) are enriched in basic and acidic residues. Polar residues predominate over residues 387–400 (SDESSFTESTSAPS).

Belongs to the MDM34 family. Component of the ER-mitochondria encounter structure (ERMES) or MDM complex, composed of mmm1, mdm10, mdm12 and mdm34.

The protein resides in the mitochondrion outer membrane. Component of the ERMES/MDM complex, which serves as a molecular tether to connect the endoplasmic reticulum (ER) and mitochondria. Components of this complex are involved in the control of mitochondrial shape and protein biogenesis, and function in nonvesicular lipid trafficking between the ER and mitochondria. Mdm34 is required for the interaction of the ER-resident membrane protein mmm1 and the outer mitochondrial membrane-resident beta-barrel protein mdm10. The polypeptide is Mitochondrial distribution and morphology protein 34 (Aspergillus fumigatus (strain ATCC MYA-4609 / CBS 101355 / FGSC A1100 / Af293) (Neosartorya fumigata)).